We begin with the raw amino-acid sequence, 548 residues long: Chaperone Ric-8A (548 aa).

2 disordered regions span residues 443-484 (DPGH…EGMT) and 517-548 (GKMT…SDTN).

This sequence belongs to the synembryn family.

It localises to the cytoplasm. Its subcellular location is the cell cortex. Functionally, chaperone that specifically binds and folds nascent G alpha proteins prior to G protein heterotrimer formation, promoting their stability and activity: folds GNAI1, GNAO1, GNA13 and GNAQ. Does not fold G(s) G-alpha proteins GNAS nor GNAL. Also acts as a guanine nucleotide exchange factor (GEF) for G alpha proteins by stimulating exchange of bound GDP for free GTP. This is Chaperone Ric-8A (ric8a) from Danio rerio (Zebrafish).